A 429-amino-acid polypeptide reads, in one-letter code: Histidine--tRNA ligase (429 aa).

This sequence belongs to the class-II aminoacyl-tRNA synthetase family. Homodimer.

It localises to the cytoplasm. The enzyme catalyses tRNA(His) + L-histidine + ATP = L-histidyl-tRNA(His) + AMP + diphosphate + H(+). This Prochlorococcus marinus subsp. pastoris (strain CCMP1986 / NIES-2087 / MED4) protein is Histidine--tRNA ligase.